The chain runs to 237 residues: Leucyl/phenylalanyl-tRNA--protein transferase (237 aa).

Belongs to the L/F-transferase family.

The protein resides in the cytoplasm. It catalyses the reaction N-terminal L-lysyl-[protein] + L-leucyl-tRNA(Leu) = N-terminal L-leucyl-L-lysyl-[protein] + tRNA(Leu) + H(+). The catalysed reaction is N-terminal L-arginyl-[protein] + L-leucyl-tRNA(Leu) = N-terminal L-leucyl-L-arginyl-[protein] + tRNA(Leu) + H(+). It carries out the reaction L-phenylalanyl-tRNA(Phe) + an N-terminal L-alpha-aminoacyl-[protein] = an N-terminal L-phenylalanyl-L-alpha-aminoacyl-[protein] + tRNA(Phe). Its function is as follows. Functions in the N-end rule pathway of protein degradation where it conjugates Leu, Phe and, less efficiently, Met from aminoacyl-tRNAs to the N-termini of proteins containing an N-terminal arginine or lysine. This is Leucyl/phenylalanyl-tRNA--protein transferase from Shewanella baltica (strain OS185).